Here is a 389-residue protein sequence, read N- to C-terminus: Alanine racemase (389 aa).

The Proton acceptor; specific for D-alanine role is filled by Lys48. Lys48 carries the post-translational modification N6-(pyridoxal phosphate)lysine. Residue Arg144 coordinates substrate. The Proton acceptor; specific for L-alanine role is filled by Tyr281. A substrate-binding site is contributed by Met329.

Belongs to the alanine racemase family. Requires pyridoxal 5'-phosphate as cofactor.

The enzyme catalyses L-alanine = D-alanine. Its pathway is amino-acid biosynthesis; D-alanine biosynthesis; D-alanine from L-alanine: step 1/1. In terms of biological role, catalyzes the interconversion of L-alanine and D-alanine. May also act on other amino acids. The chain is Alanine racemase (alr) from Leptospira interrogans serogroup Icterohaemorrhagiae serovar Lai (strain 56601).